The following is a 550-amino-acid chain: ATP synthase subunit alpha (550 aa).

172-179 (GDRKTGKT) contributes to the ATP binding site. The interval 514–550 (EDEQRVNEPPAKPLAGEENRETVTRFRDGTTDRPAES) is disordered. The segment covering 528–550 (AGEENRETVTRFRDGTTDRPAES) has biased composition (basic and acidic residues).

Belongs to the ATPase alpha/beta chains family. As to quaternary structure, F-type ATPases have 2 components, CF(1) - the catalytic core - and CF(0) - the membrane proton channel. CF(1) has five subunits: alpha(3), beta(3), gamma(1), delta(1), epsilon(1). CF(0) has three main subunits: a(1), b(2) and c(9-12). The alpha and beta chains form an alternating ring which encloses part of the gamma chain. CF(1) is attached to CF(0) by a central stalk formed by the gamma and epsilon chains, while a peripheral stalk is formed by the delta and b chains.

The protein localises to the cell membrane. The enzyme catalyses ATP + H2O + 4 H(+)(in) = ADP + phosphate + 5 H(+)(out). Produces ATP from ADP in the presence of a proton gradient across the membrane. The alpha chain is a regulatory subunit. This chain is ATP synthase subunit alpha, found in Salinispora arenicola (strain CNS-205).